Consider the following 331-residue polypeptide: Ferredoxin--NADP reductase 2 (331 aa).

Glu37, Gln45, Tyr50, Val90, Phe124, Asp286, and Thr327 together coordinate FAD.

The protein belongs to the ferredoxin--NADP reductase type 2 family. Homodimer. It depends on FAD as a cofactor.

The enzyme catalyses 2 reduced [2Fe-2S]-[ferredoxin] + NADP(+) + H(+) = 2 oxidized [2Fe-2S]-[ferredoxin] + NADPH. The protein is Ferredoxin--NADP reductase 2 of Listeria monocytogenes serotype 4b (strain F2365).